We begin with the raw amino-acid sequence, 274 residues long: Large ribosomal subunit protein uL2 (274 aa).

The segment at 224–274 (VAMNPVDHPHGGGEGRTSGGRHPVTPWGIPTKGYKTRRNKRSNKLIVQKRK) is disordered. The span at 257 to 274 (YKTRRNKRSNKLIVQKRK) shows a compositional bias: basic residues.

This sequence belongs to the universal ribosomal protein uL2 family. In terms of assembly, part of the 50S ribosomal subunit. Forms a bridge to the 30S subunit in the 70S ribosome.

In terms of biological role, one of the primary rRNA binding proteins. Required for association of the 30S and 50S subunits to form the 70S ribosome, for tRNA binding and peptide bond formation. It has been suggested to have peptidyltransferase activity; this is somewhat controversial. Makes several contacts with the 16S rRNA in the 70S ribosome. This chain is Large ribosomal subunit protein uL2, found in Francisella tularensis subsp. holarctica (strain FTNF002-00 / FTA).